Reading from the N-terminus, the 369-residue chain is Glutamate 5-kinase (369 aa).

Lysine 9 contacts ATP. Positions 49, 136, and 148 each coordinate substrate. Residues 168-169 (TD) and 210-216 (TGGMLTK) each bind ATP. Residues 275-355 (RGSVYVDEGA…KGVFIHRDDW (81 aa)) form the PUA domain.

Belongs to the glutamate 5-kinase family.

It localises to the cytoplasm. It carries out the reaction L-glutamate + ATP = L-glutamyl 5-phosphate + ADP. The protein operates within amino-acid biosynthesis; L-proline biosynthesis; L-glutamate 5-semialdehyde from L-glutamate: step 1/2. In terms of biological role, catalyzes the transfer of a phosphate group to glutamate to form L-glutamate 5-phosphate. In Neisseria meningitidis serogroup C / serotype 2a (strain ATCC 700532 / DSM 15464 / FAM18), this protein is Glutamate 5-kinase.